The primary structure comprises 231 residues: Putative cobalt transport protein CbiM 1 (231 aa).

6 helical membrane-spanning segments follow: residues 8 to 28, 41 to 61, 74 to 94, 97 to 117, 138 to 158, and 175 to 195; these read LPLQ…AYGI, TLPL…LKMP, GLGA…IVLV, ALFL…SMGI, IVNV…ITSI, and FITF…IEGI.

This sequence belongs to the CbiM family. As to quaternary structure, forms an energy-coupling factor (ECF) transporter complex composed of an ATP-binding protein (A component, CbiO), a transmembrane protein (T component, CbiQ) and 2 possible substrate-capture proteins (S components, CbiM and CbiN) of unknown stoichimetry.

It is found in the cell membrane. The protein operates within cofactor biosynthesis; adenosylcobalamin biosynthesis. In terms of biological role, part of the energy-coupling factor (ECF) transporter complex CbiMNOQ involved in cobalt import. The protein is Putative cobalt transport protein CbiM 1 of Methanosphaerula palustris (strain ATCC BAA-1556 / DSM 19958 / E1-9c).